The following is a 311-amino-acid chain: HPr kinase/phosphorylase (311 aa).

Active-site residues include histidine 138 and lysine 159. 153–160 (GDSGIGKS) provides a ligand contact to ATP. Residue serine 160 participates in Mg(2+) binding. Aspartate 177 acts as the Proton acceptor; for phosphorylation activity. Proton donor; for dephosphorylation activity in catalysis. The important for the catalytic mechanism of both phosphorylation and dephosphorylation stretch occupies residues 201-210 (IEIRGVGIID). Glutamate 202 contributes to the Mg(2+) binding site. The active site involves arginine 243. The segment at 264-269 (PVKTGR) is important for the catalytic mechanism of dephosphorylation.

Belongs to the HPrK/P family. Homohexamer. The cofactor is Mg(2+).

The catalysed reaction is [HPr protein]-L-serine + ATP = [HPr protein]-O-phospho-L-serine + ADP + H(+). The enzyme catalyses [HPr protein]-O-phospho-L-serine + phosphate + H(+) = [HPr protein]-L-serine + diphosphate. In terms of biological role, catalyzes the ATP- as well as the pyrophosphate-dependent phosphorylation of a specific serine residue in HPr, a phosphocarrier protein of the phosphoenolpyruvate-dependent sugar phosphotransferase system (PTS). HprK/P also catalyzes the pyrophosphate-producing, inorganic phosphate-dependent dephosphorylation (phosphorolysis) of seryl-phosphorylated HPr (P-Ser-HPr). The two antagonistic activities of HprK/P are regulated by several intracellular metabolites, which change their concentration in response to the absence or presence of rapidly metabolisable carbon sources (glucose, fructose, etc.) in the growth medium. Therefore, by controlling the phosphorylation state of HPr, HPrK/P is a sensor enzyme that plays a major role in the regulation of carbon metabolism and sugar transport: it mediates carbon catabolite repression (CCR), and regulates PTS-catalyzed carbohydrate uptake and inducer exclusion. This Streptococcus pneumoniae (strain 70585) protein is HPr kinase/phosphorylase.